Here is a 510-residue protein sequence, read N- to C-terminus: Lysine-specific demethylase 4D (510 aa).

The JmjN domain occupies 15–57; sequence IMIFRPTKEEFNDFDKYIAYMESQGAHRAGLAKVIPPKEWRAR. 2 positions are modified to polyADP-ribosyl glutamic acid: glutamate 23 and glutamate 24. Tyrosine 133 is a binding site for 2-oxoglutarate. The JmjC domain occupies 143-309; the sequence is DGKTQQWNVG…YGKVASQCSC (167 aa). Histidine 189 and glutamate 191 together coordinate Fe cation. 2-oxoglutarate-binding residues include asparagine 199 and lysine 207. Positions 235 and 241 each coordinate Zn(2+). Lysine 242 is a binding site for 2-oxoglutarate. Histidine 277 contributes to the Fe cation binding site. Residues cysteine 307 and cysteine 309 each contribute to the Zn(2+) site. Residues 397–510 are disordered; that stretch reads MCHTSRQAAD…ASEGGLTSDP (114 aa). Residues 461–471 are compositionally biased toward basic and acidic residues; it reads RLPEGRDDRSP.

The protein belongs to the JHDM3 histone demethylase family. It depends on Fe(2+) as a cofactor. Ubiquitinated via 'Lys-63'-linked ubiquitin chains. Deubiquitinated by USP14 with the help of TRIM14 leading to stabilization.

It is found in the nucleus. It catalyses the reaction N(6),N(6),N(6)-trimethyl-L-lysyl(9)-[histone H3] + 2 2-oxoglutarate + 2 O2 = N(6)-methyl-L-lysyl(9)-[histone H3] + 2 formaldehyde + 2 succinate + 2 CO2. Histone demethylase that specifically demethylates 'Lys-9' of histone H3, thereby playing a central role in histone code. Does not demethylate histone H3 'Lys-4', H3 'Lys-27', H3 'Lys-36' nor H4 'Lys-20'. Demethylates both di- and trimethylated H3 'Lys-9' residue, while it has no activity on monomethylated residues. Demethylation of Lys residue generates formaldehyde and succinate. This Rattus norvegicus (Rat) protein is Lysine-specific demethylase 4D (Kdm4d).